The sequence spans 479 residues: Ribosomal RNA small subunit methyltransferase F (479 aa).

S-adenosyl-L-methionine-binding positions include 125 to 131 (AAAPGSK), Glu-149, Asp-176, and Asp-194. Catalysis depends on Cys-247, which acts as the Nucleophile.

This sequence belongs to the class I-like SAM-binding methyltransferase superfamily. RsmB/NOP family.

The protein resides in the cytoplasm. The enzyme catalyses cytidine(1407) in 16S rRNA + S-adenosyl-L-methionine = 5-methylcytidine(1407) in 16S rRNA + S-adenosyl-L-homocysteine + H(+). Functionally, specifically methylates the cytosine at position 1407 (m5C1407) of 16S rRNA. This is Ribosomal RNA small subunit methyltransferase F from Escherichia coli O6:H1 (strain CFT073 / ATCC 700928 / UPEC).